A 1228-amino-acid polypeptide reads, in one-letter code: AT-rich interactive domain-containing protein 4B (1228 aa).

Disordered stretches follow at residues 123-167 and 266-307; these read LPLT…DDRK and KTEL…PFPE. 3 positions are modified to phosphoserine: S276, S295, and S296. Residues 277-305 show a composition bias toward acidic residues; sequence EAEEEEEEEDDEKEKEDNSSEEEEEIEPF. The region spanning 306–398 is the ARID domain; that stretch reads PEERENFLQQ…YLYGFEEYCR (93 aa). Residues K428 and K461 each participate in a glycyl lysine isopeptide (Lys-Gly) (interchain with G-Cter in SUMO2) cross-link. A compositionally biased stretch (basic and acidic residues) spans 437 to 464; it reads EVNVEDSKNMIPKEETPAEDESERKENI. Disordered stretches follow at residues 437-466, 479-525, 539-606, 620-802, 825-1129, and 1168-1204; these read EVNVEDSKNMIPKEETPAEDESERKENIKP, PAQS…EQAR, RPAD…SDTG, LQAS…EEKR, LNNS…RLPK, and SEVASIDRRRKRLKKKERESAATSSSSSSPSSSSITA. A Phosphoserine modification is found at S482. Over residues 483 to 511 the composition is skewed to basic and acidic residues; the sequence is DQEKEANITKLEEKESLEDKDGATARAEE. Residues 546-555 show a composition bias toward basic residues; the sequence is PKIKHRKKIK. Residues 556–569 show a composition bias toward basic and acidic residues; it reads NKLDKEKDRDEKYS. Residues S579, S581, and S588 each carry the phosphoserine modification. Basic and acidic residues predominate over residues 596–606; sequence DLADAKNSDTG. Position 630 is a phosphoserine (S630). Basic and acidic residues-rich tracts occupy residues 635 to 667 and 691 to 700; these read ERCAQDPESSSKDESKVEHSAHSRSELISKEEL and SPERLRKDVE. K664 participates in a covalent cross-link: Glycyl lysine isopeptide (Lys-Gly) (interchain with G-Cter in SUMO2). A phosphoserine mark is found at S691 and S703. The span at 701 to 713 shows a compositional bias: acidic residues; the sequence is AISEDTDFEEEDE. T706 is subject to Phosphothreonine. Over residues 721–730 the composition is skewed to basic and acidic residues; it reads VKKDTTDKAL. Residues 744-753 are compositionally biased toward polar residues; it reads IQTNCLQSGS. 3 stretches are compositionally biased toward basic and acidic residues: residues 755–765, 825–843, and 911–926; these read GKKEDRTKSKE, LNNSDERLQNNRAKDRKDV, and KPVEEKPLEVSDRKTE. Positions 927–937 are enriched in polar residues; the sequence is FPSSGSNSVLN. S930 is modified (phosphoserine). Residue T942 is modified to Phosphothreonine. Low complexity predominate over residues 944–965; that stretch reads ESPSSVTVTETSQQQSSVTVSV. S945 carries the phosphoserine modification. Over residues 972-981 the composition is skewed to basic and acidic residues; it reads EEVRSIKSET. A compositionally biased stretch (low complexity) spans 1003–1017; sequence SSPAGFNASVSSSSS. The segment covering 1046–1064 has biased composition (basic residues); sequence KKQKRSHKATVVNNKKKGK. At T1066 the chain carries Phosphothreonine. S1068, S1069, S1071, and S1075 each carry phosphoserine. Over residues 1112–1124 the composition is skewed to basic and acidic residues; it reads KNGDKDPDLKEPS. Positions 1141–1186 form a coiled coil; that stretch reads ENMTSAERISILQEKLQEIRKHYLSLKSEVASIDRRRKRLKKKERE. Positions 1188–1204 are enriched in low complexity; it reads AATSSSSSSPSSSSITA.

In terms of assembly, component of a Sin3A corepressor complex consisting of SIN3A, SAP130, SUDS3/SAP45, SAP180, HDAC1 and HDAC2. Interacts with ARID4A. Interacts with AR.

It is found in the nucleus. In terms of biological role, acts as a transcriptional repressor. May function in the assembly and/or enzymatic activity of the Sin3A corepressor complex or in mediating interactions between the complex and other regulatory complexes. Plays a role in the regulation of epigenetic modifications at the PWS/AS imprinting center near the SNRPN promoter, where it might function as part of a complex with RB1 and ARID4A. Involved in spermatogenesis, together with ARID4A, where it functions as a transcriptional coactivator for AR (androgen receptor) and enhances expression of genes required for sperm maturation. Regulates expression of the tight junction protein CLDN3 in the testis, which is important for integrity of the blood-testis barrier. Plays a role in myeloid homeostasis where it regulates the histone methylation state of bone marrow cells and expression of various genes involved in hematopoiesis. May function as a leukemia suppressor. In Rattus norvegicus (Rat), this protein is AT-rich interactive domain-containing protein 4B (Arid4b).